The following is a 43-amino-acid chain: Protein PsbN (43 aa).

Residues 5–27 (TLIAISISGLIVSFTGYALYTAF) form a helical membrane-spanning segment.

The protein belongs to the PsbN family.

It localises to the plastid. The protein localises to the chloroplast thylakoid membrane. Its function is as follows. May play a role in photosystem I and II biogenesis. This chain is Protein PsbN, found in Cicer arietinum (Chickpea).